The chain runs to 328 residues: Glycerophosphodiester phosphodiesterase GDPD4 (328 aa).

Residues 35–55 (TILFAVIFLAIFPPLYFHFKL) form a helical membrane-spanning segment. A GP-PDE domain is found at 73-312 (PLVCAHGGDS…SDPSMFQGLM (240 aa)).

The protein belongs to the glycerophosphoryl diester phosphodiesterase family. As to expression, expressed in rosette and cauline leaves.

Its subcellular location is the membrane. It catalyses the reaction a sn-glycero-3-phosphodiester + H2O = an alcohol + sn-glycerol 3-phosphate + H(+). This chain is Glycerophosphodiester phosphodiesterase GDPD4, found in Arabidopsis thaliana (Mouse-ear cress).